Reading from the N-terminus, the 141-residue chain is MLTADDKKLLTQLWEKVAGHQEEFGSEALQRMFLTYPQTKTYFPHFDLHPGSEQVRGHGKKVAAALGNAVKSLDNLSQALSELSNLHAYNLRVDPANFKLLAQCFQVVLATHLGKDYSPEMHAAFDKFLSAVAAVLAEKYR.

In terms of domain architecture, Globin spans 1–141; that stretch reads MLTADDKKLL…VAAVLAEKYR (141 aa). Residues H58 and H87 each contribute to the heme b site.

It belongs to the globin family. As to quaternary structure, heterotetramer of two alpha-D chains and two beta chains. In terms of tissue distribution, red blood cells.

In terms of biological role, involved in oxygen transport from the lung to the various peripheral tissues. This is Hemoglobin subunit alpha-D (HBAD) from Chloephaga melanoptera (Andean goose).